We begin with the raw amino-acid sequence, 379 residues long: Cystathionine gamma-lyase (379 aa).

N6-(pyridoxal phosphate)lysine is present on K195.

Belongs to the trans-sulfuration enzymes family. Pyridoxal 5'-phosphate is required as a cofactor.

It carries out the reaction L,L-cystathionine + H2O = 2-oxobutanoate + L-cysteine + NH4(+). It catalyses the reaction L-homocysteine + H2O = 2-oxobutanoate + hydrogen sulfide + NH4(+) + H(+). Functionally, catalyzes the conversion of cystathionine to cysteine, and homocysteine to sulfide. This chain is Cystathionine gamma-lyase (mccB), found in Bacillus subtilis (strain 168).